We begin with the raw amino-acid sequence, 691 residues long: MSSPDADQTAPEVLRQWQALAEEVREHQFRYYVRDAPIISDAEFDELLRRLEALEEQHPELRTPDSPTQLVGGAGFATDFEPVDHLERMLSLDNAFTADELAAWAGRIHAEVGDAAHYLCELKIDGVALSLVYREGRLTRASTRGDGRTGEDVTLNARTIADVPERLTPGDDYPVPEVLEVRGEVFFRLDDFQALNASLVEEGKAPFANPRNSAAGSLRQKDPAVTARRRLRMICHGLGHVEGFRPATLHQAYLALRAWGLPVSEHTTLATDLAGVRERIDYWGEHRHEVDHEIDGVVVKVDEVALQRRLGSTSRAPRWAIAYKYPPEEAQTKLLDIRVNVGRTGRITPFAFMTPVKVAGSTVGQATLHNASEIKRKGVLIGDTVVIRKAGDVIPEVLGPVVELRDGSEREFIMPTTCPECGSPLAPEKEGDADIRCPNARGCPGQLRERVFHVASRNGLDIEVLGYEAGVALLQAKVIADEGELFALTERDLLRTDLFRTKAGELSANGKRLLVNLDKAKAAPLWRVLVALSIRHVGPTAARALATEFGSLDAIAAASTDQLAAVEGVGPTIAAAVTEWFAVDWHREIVDKWRAAGVRMVDERDESVPRTLAGLTIVVTGSLTGFSRDDAKEAIVARGGKAAGSVSKKTNYVVAGDSPGSKYDKAVELGVPILDEDGFRRLLADGPASRT.

Residues 41-45, 91-92, and glutamate 121 each bind NAD(+); these read DAEFD and SL. The active-site N6-AMP-lysine intermediate is lysine 123. Residues arginine 144, glutamate 184, lysine 300, and lysine 324 each contribute to the NAD(+) site. Positions 418, 421, 437, and 443 each coordinate Zn(2+). Positions 607-691 constitute a BRCT domain; the sequence is SVPRTLAGLT…LLADGPASRT (85 aa).

The protein belongs to the NAD-dependent DNA ligase family. LigA subfamily. Mg(2+) is required as a cofactor. It depends on Mn(2+) as a cofactor.

It carries out the reaction NAD(+) + (deoxyribonucleotide)n-3'-hydroxyl + 5'-phospho-(deoxyribonucleotide)m = (deoxyribonucleotide)n+m + AMP + beta-nicotinamide D-nucleotide.. In terms of biological role, DNA ligase that catalyzes the formation of phosphodiester linkages between 5'-phosphoryl and 3'-hydroxyl groups in double-stranded DNA using NAD as a coenzyme and as the energy source for the reaction. It is essential for DNA replication and repair of damaged DNA. The sequence is that of DNA ligase from Mycobacterium tuberculosis (strain ATCC 25177 / H37Ra).